The primary structure comprises 133 residues: Small ribosomal subunit protein uS8 (133 aa).

Positions 1-28 (MANHDPISDMLTRIRNASEKRHEKTKVP) are disordered. Over residues 16-26 (NASEKRHEKTK) the composition is skewed to basic and acidic residues.

This sequence belongs to the universal ribosomal protein uS8 family. In terms of assembly, part of the 30S ribosomal subunit. Contacts proteins S5 and S12.

Its function is as follows. One of the primary rRNA binding proteins, it binds directly to 16S rRNA central domain where it helps coordinate assembly of the platform of the 30S subunit. This Prochlorococcus marinus (strain NATL2A) protein is Small ribosomal subunit protein uS8.